The sequence spans 227 residues: 2-C-methyl-D-erythritol 4-phosphate cytidylyltransferase (227 aa).

It belongs to the IspD/TarI cytidylyltransferase family. IspD subfamily.

It carries out the reaction 2-C-methyl-D-erythritol 4-phosphate + CTP + H(+) = 4-CDP-2-C-methyl-D-erythritol + diphosphate. The protein operates within isoprenoid biosynthesis; isopentenyl diphosphate biosynthesis via DXP pathway; isopentenyl diphosphate from 1-deoxy-D-xylulose 5-phosphate: step 2/6. Its function is as follows. Catalyzes the formation of 4-diphosphocytidyl-2-C-methyl-D-erythritol from CTP and 2-C-methyl-D-erythritol 4-phosphate (MEP). The sequence is that of 2-C-methyl-D-erythritol 4-phosphate cytidylyltransferase from Caldanaerobacter subterraneus subsp. tengcongensis (strain DSM 15242 / JCM 11007 / NBRC 100824 / MB4) (Thermoanaerobacter tengcongensis).